The primary structure comprises 585 residues: Complement component C8 alpha chain (585 aa).

The first 20 residues, 1–20 (MLVAAFFTLFLVTCQPAVTA), serve as a signal peptide directing secretion. Residues 21–30 (QEKVNQRVNR) constitute a propeptide that is removed on maturation. The region spanning 38–91 (DCQLSSWSEWTDCFPCQDTKYRHRSLLQPNKFGGTICSGDIWDRASCYSPTACL) is the TSP type-1 1 domain. Disulfide bonds link C39-C74, C50-C84, C53-C90, C96-C108, C102-C121, C115-C130, and C140-C177. C-linked (Man) tryptophan glycosylation is present at W44. An LDL-receptor class A domain is found at 94-132 (AQCGQDFQCKETGRCLKRHLVCNGENDCLDGSDEDNCED). Residues L113, N116, E118, D120, D126, and E127 each contribute to the Ca(2+) site. The MACPF domain maps to 136 to 499 (TESDCAQYDP…QYLMEFNACR (364 aa)). The next 4 membrane-spanning stretches (beta stranded) occupy residues 248–256 (AGVTISAGL), 259–266 (SPLLGTVG), 377–384 (GGFGEIQY), and 391–396 (AQGILS). Residues C375 and C400 are joined by a disulfide bond. N438 carries N-linked (GlcNAc...) asparagine glycosylation. 4 disulfide bridges follow: C498/C545, C500/C516, C503/C518, and C520/C529. The EGF-like domain maps to 499 to 530 (RCGPCFNNGKPILEGTSCRCQCSLGLQGPACE). Residues 540-584 (DGHWSCWGSWSPCTAGTRERRRECNNPAPQNGGAPCPGWRVQTQA) enclose the TSP type-1 2 domain. C-linked (Man) tryptophan glycans are attached at residues W543, W546, and W549. Intrachain disulfides connect C552/C585 and C563/C575.

Belongs to the complement C6/C7/C8/C9 family. In terms of assembly, heterotrimer of 3 chains: alpha (C8A), beta (C8B) and gamma (C8G); the alpha and gamma chains are disulfide bonded. Component of the membrane attack complex (MAC), composed of complement C5b, C6, C7, C8A, C8B, C8G and multiple copies of the pore-forming subunit C9.

It localises to the secreted. It is found in the target cell membrane. Its activity is regulated as follows. Membrane attack complex (MAC) assembly is inhibited by CD59, thereby protecting self-cells from damage during complement activation. CD59 acts by binding to the beta-haipins of C8 (C8A and C8B), forming an intermolecular beta-sheet that prevents incorporation of the multiple copies of C9 required for complete formation of the osmolytic pore. MAC assembly is also inhibited by clusterin (CLU) chaperones that inhibit polymerization of C9. Its function is as follows. Component of the membrane attack complex (MAC), a multiprotein complex activated by the complement cascade, which inserts into a target cell membrane and forms a pore, leading to target cell membrane rupture and cell lysis. The MAC is initiated by proteolytic cleavage of C5 into complement C5b in response to the classical, alternative, lectin and GZMK complement pathways. The complement pathways consist in a cascade of proteins that leads to phagocytosis and breakdown of pathogens and signaling that strengthens the adaptive immune system. C8A, together with C8B and C8G, inserts into the target membrane, but does not form pores by itself. During MAC assembly, associates with C5b, C6 and C7 to form the C5b8 intermediate complex that inserts into the target membrane and traverses the bilayer increasing membrane rigidity. The sequence is that of Complement component C8 alpha chain (C8A) from Oryctolagus cuniculus (Rabbit).